The sequence spans 249 residues: MTILRDYKLSGRKAFAVLLDPDKVEQDAFSTLLQRTADYPVDFFLVGGSLVTDYAHKEVIATIRRYSSTPVILFPGNPLHIESSADAILLLSLISGRNADFLIGQHVIAAPLLKKSGLEILPTGYMVVDSGTQTTVSYISGTMPLPHDKPDVAACTALAGEMLGLQLMYLDAGSGARRPVSAAMIAAVRKAVNVPIIVGGGITSGEKAYEALKAGADMIVVGNGVEQDPDLLPQLATVVREFNQSVVQA.

Positions 20 and 49 each coordinate Mg(2+). Sn-glycerol 1-phosphate-binding positions include 169–175 (YLDAGSG), 200–201 (GG), and 222–223 (GN).

This sequence belongs to the GGGP/HepGP synthase family. Group II subfamily. Homohexamer. Mg(2+) serves as cofactor.

It carries out the reaction sn-glycerol 1-phosphate + (2E,6E,10E)-geranylgeranyl diphosphate = sn-3-O-(geranylgeranyl)glycerol 1-phosphate + diphosphate. Its function is as follows. Prenyltransferase that catalyzes the transfer of the geranylgeranyl moiety of geranylgeranyl diphosphate (GGPP) to the C3 hydroxyl of sn-glycerol-1-phosphate (G1P). The chain is Geranylgeranylglyceryl phosphate synthase from Spirosoma linguale (strain ATCC 33905 / DSM 74 / LMG 10896 / Claus 1).